A 159-amino-acid chain; its full sequence is Nascent polypeptide-associated complex subunit beta (159 aa).

2 disordered regions span residues 1–39 and 124–159; these read MDMEKLKRMQARGGVRTGDGKGTPRRKVKNVHKSTGMDD and QSMQKAEGGEEKKDDEEDDDDIPDLVEGENFEDKVE. Positions 23–32 are enriched in basic residues; it reads TPRRKVKNVH. The 66-residue stretch at 36 to 101 folds into the NAC-A/B domain; sequence GMDDKKLQTS…GEDKELTELV (66 aa). The span at 136–153 shows a compositional bias: acidic residues; sequence KDDEEDDDDIPDLVEGEN.

This sequence belongs to the NAC-beta family. In terms of assembly, part of the nascent polypeptide-associated complex (NAC), consisting of EGD2 and EGD1. NAC associates with ribosomes via EGD1.

It is found in the cytoplasm. Its subcellular location is the nucleus. Functionally, component of the nascent polypeptide-associated complex (NAC), a dynamic component of the ribosomal exit tunnel, protecting the emerging polypeptides from interaction with other cytoplasmic proteins to ensure appropriate nascent protein targeting. The NAC complex also promotes mitochondrial protein import by enhancing productive ribosome interactions with the outer mitochondrial membrane and blocks the inappropriate interaction of ribosomes translating non-secretory nascent polypeptides with translocation sites in the membrane of the endoplasmic reticulum. EGD1 may act as a transcription factor that exert a negative effect on the expression of several genes that are transcribed by RNA polymerase II. The sequence is that of Nascent polypeptide-associated complex subunit beta (egd1) from Sclerotinia sclerotiorum (strain ATCC 18683 / 1980 / Ss-1) (White mold).